The primary structure comprises 237 residues: Phosphoribosylaminoimidazole-succinocarboxamide synthase (237 aa).

It belongs to the SAICAR synthetase family.

It carries out the reaction 5-amino-1-(5-phospho-D-ribosyl)imidazole-4-carboxylate + L-aspartate + ATP = (2S)-2-[5-amino-1-(5-phospho-beta-D-ribosyl)imidazole-4-carboxamido]succinate + ADP + phosphate + 2 H(+). It participates in purine metabolism; IMP biosynthesis via de novo pathway; 5-amino-1-(5-phospho-D-ribosyl)imidazole-4-carboxamide from 5-amino-1-(5-phospho-D-ribosyl)imidazole-4-carboxylate: step 1/2. In Listeria monocytogenes serotype 4a (strain HCC23), this protein is Phosphoribosylaminoimidazole-succinocarboxamide synthase.